The sequence spans 445 residues: Putative serpin-Z5 (445 aa).

Residues 356-380 form an RCL region; the sequence is GTEAAASAINMVCGMSMTPEPRPVP.

Belongs to the serpin family.

Functionally, probable serine protease inhibitor. In Oryza sativa subsp. japonica (Rice), this protein is Putative serpin-Z5.